The primary structure comprises 343 residues: Heat-inducible transcription repressor HrcA (343 aa).

It belongs to the HrcA family.

In terms of biological role, negative regulator of class I heat shock genes (grpE-dnaK-dnaJ and groELS operons). Prevents heat-shock induction of these operons. The sequence is that of Heat-inducible transcription repressor HrcA from Alkaliphilus metalliredigens (strain QYMF).